The chain runs to 448 residues: Protein chibby homolog 2 (448 aa).

Residues Ser41, Ser86, Ser89, Ser97, Ser124, Ser144, Ser148, and Ser150 each carry the phosphoserine modification. Residues 163–198 (AKEFVLQEENKSLREENKALREENRMLRKENKILQV) are a coiled coil. Residues 206–226 (SLGREESRPPSPLPQKDSASL) form a disordered region. Phosphoserine occurs at positions 212 and 225. Positions 242–267 (KEDSTLQLLREENRALQQLLEQKQAY) form a coiled coil. A disordered region spans residues 270-321 (QTEDAAAPAEESKPAPSPHEEPCSPGLLQDQGSGLSSHFEEPRGPPAPQEDS). The span at 279–291 (EESKPAPSPHEEP) shows a compositional bias: basic and acidic residues. Ser335 and Ser338 each carry phosphoserine. Positions 356–414 (LQLLREMRQALQALLKENRLLQEENRTLQVLRAEHRGFQEENKALWENNKLKLQQKLVI) form a coiled coil.

The protein belongs to the chibby family. SPERT subfamily. In terms of assembly, homodimer. Binds to NEK1.

The sequence is that of Protein chibby homolog 2 (CBY2) from Macaca fascicularis (Crab-eating macaque).